The following is a 169-amino-acid chain: Hydroperoxy fatty acid reductase gpx1 (169 aa).

Cysteine 41 is a catalytic residue.

This sequence belongs to the glutathione peroxidase family. Monomer.

The enzyme catalyses a hydroperoxy polyunsaturated fatty acid + NADPH + H(+) = a hydroxy polyunsaturated fatty acid + NADP(+) + H2O. Its activity is regulated as follows. Mercaptosuccinate, pCMB, and nethylmaleimide act as inhibitors of the catalytic activity. Functionally, hydroperoxy fatty acid reductase essential for the removal of lipid hydroperoxides under normal and stress conditions, leading to the protection of membrane integrity. In Synechocystis sp. (strain ATCC 27184 / PCC 6803 / Kazusa), this protein is Hydroperoxy fatty acid reductase gpx1 (gpx1).